The sequence spans 243 residues: DNA repair protein RecO (243 aa).

The protein belongs to the RecO family.

Involved in DNA repair and RecF pathway recombination. This Xylella fastidiosa (strain M23) protein is DNA repair protein RecO.